The sequence spans 266 residues: Cytochrome c oxidase assembly factor 7 homolog (266 aa).

Sel1-like repeat units lie at residues 32–64 (PEAC…DDYG) and 66–104 (AKSC…NLND). The segment covering 166–179 (AVTASSGSGTSSPP) has biased composition (low complexity). The interval 166–187 (AVTASSGSGTSSPPAGQPPLKD) is disordered. The stretch at 212–247 (MYACANLSQMYARGDGIEKNEKEAEKYKKLALEMQD) is one Sel1-like 3 repeat.

The protein belongs to the hcp beta-lactamase family.

In terms of biological role, required for locomotion. Probably involved in the regulation of formation/maintenance of motor neurons at presynaptic terminals at the neuromuscular junction. This chain is Cytochrome c oxidase assembly factor 7 homolog, found in Drosophila melanogaster (Fruit fly).